A 289-amino-acid chain; its full sequence is MLSMLWFLLSLLSLLLLPCLRPCFPAKGSLKNKKKIDKGTYVVGEEETPKELQRELMPRHVAVIMDGNRRWAKQTGLLTSQGYEAGAKRLLEFADLCFKLGINTVSAFAFSTENWGRHKIEVKCLMYLFQRYLKSKIQFFQSKEIRVSVIGNLAKIPESLLRTVHELEEATKSYKKKHLILAIDYSGRFDILGACKNIVKKSEQGLIREEDVDETLFERELQTRCTEFPSPDLLIRTSGEQRISNFFLWQLAYTEFFFSPVLWPDFDKQKFIEALVSYQRRDRRFGSRL.

A helical membrane pass occupies residues Leu-2–Pro-22.

This sequence belongs to the UPP synthase family. Mg(2+) is required as a cofactor.

Its subcellular location is the endoplasmic reticulum membrane. The protein operates within protein modification; protein glycosylation. Its function is as follows. Catalyzes cis-prenyl chain elongation to produce the polyprenyl backbone of dolichol, a glycosyl carrier-lipid required for the biosynthesis of several classes of glycoprotein. This is Dehydrodolichyl diphosphate synthase 4 from Arabidopsis thaliana (Mouse-ear cress).